Here is a 1081-residue protein sequence, read N- to C-terminus: Importin-4 (1081 aa).

At methionine 1 the chain carries N-acetylmethionine. The Importin N-terminal domain maps to alanine 24–arginine 90. 6 HEAT repeats span residues lysine 348–aspartate 385, arginine 390–proline 427, serine 431–proline 471, proline 475–alanine 513, glutamine 895–histidine 932, and glutamate 936–threonine 974.

This sequence belongs to the importin beta family. Found in a cytosolic complex with ASF1 (ASF1A or ASF1B) and histones H3 and H4.

Its subcellular location is the cytoplasm. It is found in the nucleus. In terms of biological role, nuclear transport receptor that mediates nuclear import of proteins, such as histones, RPS3A, TNP2 and VDR. Serves as receptor for nuclear localization signals (NLS) in cargo substrates. Is thought to mediate docking of the importin/substrate complex to the nuclear pore complex (NPC) through binding to nucleoporin and the complex is subsequently translocated through the pore by an energy requiring, Ran-dependent mechanism. At the nucleoplasmic side of the NPC, Ran binds to the importin, the importin/substrate complex dissociates and importin is re-exported from the nucleus to the cytoplasm where GTP hydrolysis releases Ran. The directionality of nuclear import is thought to be conferred by an asymmetric distribution of the GTP- and GDP-bound forms of Ran between the cytoplasm and nucleus. Mediates the nuclear import of the histone H3-H4 dimer when in complex with ASF1 (ASF1A or ASF1B). Mediates the ligand-independent nuclear import of vitamin D receptor (VDR). In vitro, mediates the nuclear import of human cytomegalovirus UL84 by recognizing a non-classical NLS. The sequence is that of Importin-4 (IPO4) from Homo sapiens (Human).